A 2603-amino-acid chain; its full sequence is Squalestatin tetraketide synthase (2603 aa).

The 427-residue stretch at 29-455 (TIPIAIIGMS…GANAHVILES (427 aa)) folds into the Ketosynthase family 3 (KS3) domain. Active-site for beta-ketoacyl synthase activity residues include cysteine 202, histidine 337, and histidine 377. Positions 463–512 (IANGSGRSNGTGNGHNGANGTTNGHNGTNGTTNGHFDATQATNGHYGTDE) are disordered. Over residues 469-479 (RSNGTGNGHNG) the composition is skewed to gly residues. Over residues 480–497 (ANGTTNGHNGTNGTTNGH) the composition is skewed to low complexity. Residues 608 to 931 (VFTGQGAQWF…PYISCLLRGQ (324 aa)) form a malonyl-CoA:ACP transacylase (MAT) domain region. The interval 1000–1138 (HDLLGSLIVG…GRITIEFDTS (139 aa)) is N-terminal hotdog fold. In terms of domain architecture, PKS/mFAS DH spans 1000-1314 (HDLLGSLIVG…NQSVGQMAPQ (315 aa)). Positions 1000-1314 (HDLLGSLIVG…NQSVGQMAPQ (315 aa)) are dehydratase (DH) domain. Residue histidine 1032 is the Proton acceptor; for dehydratase activity of the active site. Residues 1157-1314 (LMRSVDPSNL…NQSVGQMAPQ (158 aa)) are C-terminal hotdog fold. Aspartate 1223 functions as the Proton donor; for dehydratase activity in the catalytic mechanism. Residues 1465–1665 (LYRYYTDAIK…GLDIELRDCD (201 aa)) form a methyltransferase (CMet) domain region. An enoyl reductase (ER) (ER) domain region spans residues 1892 to 2205 (GLIDTLQFSK…AGKHMGKIVI (314 aa)). The segment at 2228–2406 (ASYLIVGGLG…AVSIDLGMVQ (179 aa)) is ketoreductase (KR) domain. The region spanning 2516-2593 (EAIDVVGRAI…ALATTVATKS (78 aa)) is the Carrier domain. Serine 2553 bears the O-(pantetheine 4'-phosphoryl)serine mark.

Its pathway is secondary metabolite biosynthesis. In terms of biological role, highly reducing polyketide synthase (HR-PKS); part of the gene cluster that mediates the biosynthesis of squalestatin S1 (SQS1, also known as zaragozic acid A), a lead compound for the treatment of hyper-cholesterolemia by targeting squalene synthase (SS). Pks1 is responsible for the biosynthesis of the tetraketide sidechain of SQS1. The biosynthesis must involve 3 rounds of chain extension. After the first and second rounds methyl-transfer occurs, and in all rounds of extension the ketoreductase and dehydratase are active. The enoyl reductase and C-MeT are not active in the final round of extension. The polypeptide is Squalestatin tetraketide synthase (Phoma sp. (strain C2932)).